The primary structure comprises 187 residues: Ribosome maturation factor RimM (187 aa).

Residues 1 to 17 show a composition bias toward polar residues; the sequence is MTSTPSPSTADPNSTND. A disordered region spans residues 1–21; sequence MTSTPSPSTADPNSTNDWLPV. The PRC barrel domain maps to 111 to 184; the sequence is EGEFHLLDLV…WLLLTPPPGL (74 aa).

It belongs to the RimM family. Binds ribosomal protein uS19.

It localises to the cytoplasm. Its function is as follows. An accessory protein needed during the final step in the assembly of 30S ribosomal subunit, possibly for assembly of the head region. Essential for efficient processing of 16S rRNA. May be needed both before and after RbfA during the maturation of 16S rRNA. It has affinity for free ribosomal 30S subunits but not for 70S ribosomes. This is Ribosome maturation factor RimM from Synechococcus sp. (strain CC9311).